Reading from the N-terminus, the 629-residue chain is DNA ligase B (629 aa).

Lys-151 acts as the N6-AMP-lysine intermediate in catalysis. Positions 588–597 (LQKQHGTNTR) are enriched in polar residues. A disordered region spans residues 588 to 629 (LQKQHGTNTRNEQKGDVRRVDVKQDNGTTWLPEQDSNLRPND). Over residues 598-611 (NEQKGDVRRVDVKQ) the composition is skewed to basic and acidic residues. Polar residues predominate over residues 612–629 (DNGTTWLPEQDSNLRPND).

This sequence belongs to the NAD-dependent DNA ligase family. LigB subfamily.

It carries out the reaction NAD(+) + (deoxyribonucleotide)n-3'-hydroxyl + 5'-phospho-(deoxyribonucleotide)m = (deoxyribonucleotide)n+m + AMP + beta-nicotinamide D-nucleotide.. In terms of biological role, catalyzes the formation of phosphodiester linkages between 5'-phosphoryl and 3'-hydroxyl groups in double-stranded DNA using NAD as a coenzyme and as the energy source for the reaction. This chain is DNA ligase B, found in Chromohalobacter salexigens (strain ATCC BAA-138 / DSM 3043 / CIP 106854 / NCIMB 13768 / 1H11).